Here is a 504-residue protein sequence, read N- to C-terminus: Maturase K (504 aa).

This sequence belongs to the intron maturase 2 family. MatK subfamily.

The protein resides in the plastid. It is found in the chloroplast. In terms of biological role, usually encoded in the trnK tRNA gene intron. Probably assists in splicing its own and other chloroplast group II introns. This Matthiola incana (Common stock) protein is Maturase K.